The sequence spans 249 residues: MWQLLPSTALLLVASARPQAADLPKAVVVSDPPGNRVLTLDSVTFTCQGANPSGNHSTRWLHNGTLISSQTSYFIRAASVENSGEYRCQTGLSELSDPVQLEVHVGWLLLQTPQRVFQEGEPIRLRCHSWKNKPVWNVQYFQNRRGKKFSYGNSEFYIPAARSEHNGSYFCRGLIGKRNESSEAVDIIIQGPPVPSTSALLPFWPHIPFAVVMALLFAVDTGLYFAMQRHLHNSKRAWENSKVSWKQDP.

The N-terminal stretch at 1–16 (MWQLLPSTALLLVASA) is a signal peptide. The Extracellular segment spans residues 17-198 (RPQAADLPKA…IQGPPVPSTS (182 aa)). Ig-like C2-type domains follow at residues 24 to 104 (PKAV…LEVH) and 119 to 172 (EGEP…YFCR). Cystine bridges form between cysteine 47-cysteine 88 and cysteine 127-cysteine 171. Residues asparagine 55, asparagine 63, asparagine 166, and asparagine 179 are each glycosylated (N-linked (GlcNAc...) asparagine). The chain crosses the membrane as a helical span at residues 199 to 219 (ALLPFWPHIPFAVVMALLFAV). At 220-249 (DTGLYFAMQRHLHNSKRAWENSKVSWKQDP) the chain is on the cytoplasmic side.

As to quaternary structure, forms a heterooligomeric complex with ITAM-containing signaling subunits FCER1G. Interacts (via transmembrane domain) with signaling subunits; this interaction is a prerequisite for receptor complex expression on the cell surface and intracellular signal transduction. Binds the Fc region of antigen-complexed IgG.

Its subcellular location is the cell membrane. Functionally, receptor for the invariable Fc fragment of immunoglobulin gamma (IgG). Optimally activated upon binding of clustered antigen-IgG complexes displayed on cell surfaces, triggers lysis of antibody-coated cells, a process known as antibody-dependent cellular cytotoxicity (ADCC). Does not bind free monomeric IgG, thus avoiding inappropriate effector cell activation in the absence of antigenic trigger. Mediates IgG effector functions on natural killer (NK) cells. Binds antigen-IgG complexes generated upon infection and triggers NK cell-dependent cytokine production and degranulation to limit viral load and propagation. Fc-binding subunit that associates with FCER1G adapter to form functional signaling complexes. Following the engagement of antigen-IgG complexes, triggers phosphorylation of immunoreceptor tyrosine-based activation motif (ITAM)-containing adapter with subsequent activation of phosphatidylinositol 3-kinase signaling and sustained elevation of intracellular calcium that ultimately drive NK cell activation. Mediates enhanced ADCC in response to afucosylated IgGs. The protein is Low affinity immunoglobulin gamma Fc region receptor III-A of Mustela putorius furo (European domestic ferret).